We begin with the raw amino-acid sequence, 119 residues long: Ribonuclease P protein component (119 aa).

Belongs to the RnpA family. In terms of assembly, consists of a catalytic RNA component (M1 or rnpB) and a protein subunit.

It catalyses the reaction Endonucleolytic cleavage of RNA, removing 5'-extranucleotides from tRNA precursor.. RNaseP catalyzes the removal of the 5'-leader sequence from pre-tRNA to produce the mature 5'-terminus. It can also cleave other RNA substrates such as 4.5S RNA. The protein component plays an auxiliary but essential role in vivo by binding to the 5'-leader sequence and broadening the substrate specificity of the ribozyme. This is Ribonuclease P protein component from Erwinia tasmaniensis (strain DSM 17950 / CFBP 7177 / CIP 109463 / NCPPB 4357 / Et1/99).